The chain runs to 247 residues: Synaptonemal complex central element protein 1-like (247 aa).

The stretch at Ser-71–Ser-196 forms a coiled coil. The segment at Glu-189–Cys-247 is disordered. The span at Gln-220–Pro-241 shows a compositional bias: basic and acidic residues.

It belongs to the SYCE family. In terms of tissue distribution, isoform 1 is abundantly expressed in testis and weakly in ovary, it is not found in other tissues. Isoform 2 is expressed in testis and poorly in brain, heart, lung and other examined tissues.

Its function is as follows. May be involved in meiosis. Isoform 1 may be involved in meiosis during spermatogenesis while isoform 2 is probably related to a later stage of meiosis, in the development stage of secondary spermatocytes and spermatids. The chain is Synaptonemal complex central element protein 1-like (Syce1l) from Mus musculus (Mouse).